We begin with the raw amino-acid sequence, 199 residues long: Ribonuclease HII (199 aa).

In terms of domain architecture, RNase H type-2 spans 9–198; the sequence is QFVAGVDEVG…VRAAIEQMNL (190 aa). The a divalent metal cation site is built by D15, E16, and D107.

It belongs to the RNase HII family. Mn(2+) is required as a cofactor. It depends on Mg(2+) as a cofactor.

Its subcellular location is the cytoplasm. The enzyme catalyses Endonucleolytic cleavage to 5'-phosphomonoester.. Functionally, endonuclease that specifically degrades the RNA of RNA-DNA hybrids. This Saccharophagus degradans (strain 2-40 / ATCC 43961 / DSM 17024) protein is Ribonuclease HII.